A 508-amino-acid chain; its full sequence is Fasciclin-3 (508 aa).

The N-terminal stretch at 1 to 20 is a signal peptide; it reads MSRIVFICLAAILTDALTWA. Gln-21 bears the Pyrrolidone carboxylic acid mark. The Extracellular segment spans residues 21 to 346; sequence QVNVEPNTAL…SSKPPSSSLD (326 aa). The 63-residue stretch at 44–106 folds into the Ig-like V-type domain; that stretch reads GRSINYCRIE…NGQVKCSLGV (63 aa). Ig-like C2-type domains are found at residues 126–223 and 236–310; these read PIIE…ESVP and APVH…GLTL. Residues Cys-150 and Cys-211 are joined by a disulfide bond. N-linked (GlcNAc...) asparagine glycans are attached at residues Asn-160, Asn-257, and Asn-300. The helical transmembrane segment at 347–370 threads the bilayer; it reads VAAIVGIVVAVAVLVLVVLLIVFA. At 371 to 508 the chain is on the cytoplasmic side; that stretch reads RATGRWCFGG…QSTSPVWTFK (138 aa). Positions 381–439 are disordered; it reads KSIKTPTNETSDTESADIKATSTATATTTMGGVGVSAEEEETVNEQESPQEQQQQQQKK. Ser-382 is subject to Phosphoserine. Composition is skewed to low complexity over residues 400-409 and 425-437; these read ATSTATATTT and EQESPQEQQQQQQ. Ser-459 is subject to Phosphoserine.

In terms of tissue distribution, expressed on different subsets of axon bundles (fascicles) in insect embryos.

It localises to the membrane. Functionally, mediates cell adhesion in a Ca(2+)-independent manner. It plays a role in axon outgrowth, guidance and fasciculation of the developing nervous system. Function in neurons is essential for adult survival, and is important for climbing behavior and activity. The polypeptide is Fasciclin-3 (Fas3) (Drosophila melanogaster (Fruit fly)).